The chain runs to 342 residues: Fructose-1,6-bisphosphatase class 1 (342 aa).

Residues Glu-91, Asp-113, Leu-115, and Asp-116 each coordinate Mg(2+). Substrate is bound by residues 116–119, Asn-211, and Lys-277; that span reads DGSS. Glu-283 is a binding site for Mg(2+).

It belongs to the FBPase class 1 family. In terms of assembly, homotetramer. Mg(2+) serves as cofactor.

It is found in the cytoplasm. It carries out the reaction beta-D-fructose 1,6-bisphosphate + H2O = beta-D-fructose 6-phosphate + phosphate. It participates in carbohydrate biosynthesis; gluconeogenesis. The sequence is that of Fructose-1,6-bisphosphatase class 1 from Bordetella petrii (strain ATCC BAA-461 / DSM 12804 / CCUG 43448).